Here is a 221-residue protein sequence, read N- to C-terminus: Vesicle transport v-SNARE 13 (221 aa).

Topologically, residues 1-198 (MSQGFERYER…MTRRMNRNKW (198 aa)) are cytoplasmic. Residues 32–93 (EQKKQNLSEI…FKTEVKRITS (62 aa)) adopt a coiled-coil conformation. The helical; Anchor for type IV membrane protein transmembrane segment at 199-219 (TIGAIITVLVLAIIFILYFKL) threads the bilayer. Topologically, residues 220–221 (TR) are vesicular.

The protein belongs to the VTI1 family. In terms of assembly, forms SNARE complexes with t-SNAREs. Expressed at low levels in roots, stems, flowers and leaves.

The protein resides in the vacuole membrane. It is found in the prevacuolar compartment membrane. It localises to the endosome membrane. Its subcellular location is the early endosome membrane. Functionally, may function as a v-SNARE responsible for targeting vesicles involved in the secretory pathway. Involved in actin-dependent endosomal trafficking pathways associated with the vacuole within root hairs and root tip epidermal cells. Essential for cell wall organization and polarized root hair growth. Also required for the localization of SYP41 to the trans-Golgi network in root hair cells. This chain is Vesicle transport v-SNARE 13, found in Arabidopsis thaliana (Mouse-ear cress).